The following is a 486-amino-acid chain: ATP synthase subunit beta (486 aa).

Glycine 170 to threonine 177 provides a ligand contact to ATP.

This sequence belongs to the ATPase alpha/beta chains family. As to quaternary structure, F-type ATPases have 2 components, CF(1) - the catalytic core - and CF(0) - the membrane proton channel. CF(1) has five subunits: alpha(3), beta(3), gamma(1), delta(1), epsilon(1). CF(0) has three main subunits: a(1), b(2) and c(9-12). The alpha and beta chains form an alternating ring which encloses part of the gamma chain. CF(1) is attached to CF(0) by a central stalk formed by the gamma and epsilon chains, while a peripheral stalk is formed by the delta and b chains.

The protein localises to the cell membrane. The enzyme catalyses ATP + H2O + 4 H(+)(in) = ADP + phosphate + 5 H(+)(out). In terms of biological role, produces ATP from ADP in the presence of a proton gradient across the membrane. The catalytic sites are hosted primarily by the beta subunits. The chain is ATP synthase subunit beta from Clavibacter michiganensis subsp. michiganensis (strain NCPPB 382).